The following is a 538-amino-acid chain: Ribosome-associated complex subunit SSZ1 (538 aa).

The tract at residues 400 to 538 (PVIVNTPHLK…KTGNAVKGEL (139 aa)) is peptide-binding domain. A disordered region spans residues 464-484 (PIPKEENAEEDDESEWSDDEP). The span at 470 to 484 (NAEEDDESEWSDDEP) shows a compositional bias: acidic residues. Phosphoserine occurs at positions 477 and 480.

The protein belongs to the heat shock protein 70 family. In terms of assembly, RAC is a heterodimer of the Hsp70/DnaK-type chaperone SSZ1 and the Hsp40/DnaJ-type chaperone ZUO1. RAC associates with ribosomes via ZUO1.

It is found in the cytoplasm. Functionally, component of the ribosome-associated complex (RAC), a heterodimeric chaperone complex involved in regulation of accurate translation termination and in folding or maintaining nascent polypeptides in a folding-competent state. RAC stimulates the ATPase activity of the ribosome-associated pool of Hsp70-type chaperones SSB1/SSB2 that bind to the nascent polypeptide chain. SSZ1 is required for ZUO1 to function efficiently as a J-protein for SSB1/SSB2. Also involved in pleiotropic drug resistance by post-translational activation of transcription factor PDR1. This is Ribosome-associated complex subunit SSZ1 (SSZ1) from Saccharomyces cerevisiae (strain ATCC 204508 / S288c) (Baker's yeast).